Consider the following 148-residue polypeptide: uncharacterized protein (148 aa).

2 disordered regions span residues 1–86 (MCPP…VQSP) and 122–148 (RAHR…TSPC). Over residues 38-57 (RPPKMQRRPRPPVAKRRRFP) the composition is skewed to basic residues. Over residues 134-148 (QSRQRPSPDSQTSPC) the composition is skewed to polar residues.

Belongs to the Epstein-Barr virus BLLF2 family.

This is an uncharacterized protein from Homo sapiens (Human).